We begin with the raw amino-acid sequence, 266 residues long: F-actin-capping protein subunit beta (266 aa).

This sequence belongs to the F-actin-capping protein beta subunit family. Component of the F-actin capping complex, composed of a heterodimer of an alpha and a beta subunit.

The protein localises to the cytoplasm. The protein resides in the cytoskeleton. It is found in the actin patch. In terms of biological role, F-actin-capping proteins bind in a Ca(2+)-independent manner to the fast growing ends of actin filaments (barbed end) thereby blocking the exchange of subunits at these ends. Unlike other capping proteins (such as gelsolin and severin), these proteins do not sever actin filaments. This Aspergillus oryzae (strain ATCC 42149 / RIB 40) (Yellow koji mold) protein is F-actin-capping protein subunit beta (cap2).